A 293-amino-acid polypeptide reads, in one-letter code: DNA repair protein RecO (293 aa).

The protein belongs to the RecO family.

Its function is as follows. Involved in DNA repair and RecF pathway recombination. This Acaryochloris marina (strain MBIC 11017) protein is DNA repair protein RecO.